Consider the following 113-residue polypeptide: Large ribosomal subunit protein bL20c (113 aa).

This sequence belongs to the bacterial ribosomal protein bL20 family.

Its subcellular location is the plastid. It localises to the chloroplast. Its function is as follows. Binds directly to 23S ribosomal RNA and is necessary for the in vitro assembly process of the 50S ribosomal subunit. It is not involved in the protein synthesizing functions of that subunit. This is Large ribosomal subunit protein bL20c from Nephroselmis olivacea (Green alga).